Here is a 452-residue protein sequence, read N- to C-terminus: UPF0210 protein Ccel_1722 (452 aa).

The protein belongs to the UPF0210 family. In terms of assembly, homodimer.

In Ruminiclostridium cellulolyticum (strain ATCC 35319 / DSM 5812 / JCM 6584 / H10) (Clostridium cellulolyticum), this protein is UPF0210 protein Ccel_1722.